We begin with the raw amino-acid sequence, 523 residues long: Monocarboxylate transporter 7 (523 aa).

Residues 1-21 are Cytoplasmic-facing; sequence MTQNKLKLCSKANVYTEVPDG. A helical membrane pass occupies residues 22 to 42; sequence GWGWAVAVSFFFVEVFTYGII. Residues 43 to 62 lie on the Extracellular side of the membrane; that stretch reads KTFGVFFNDLMDSFNESNSR. Residues 63–83 form a helical membrane-spanning segment; it reads ISWIISICVFVLTFSAPLATV. Topologically, residues 84-91 are cytoplasmic; sequence LSNRFGHR. The chain crosses the membrane as a helical span at residues 92–112; that stretch reads LVVMLGGLLVSTGMVAASFSQ. The Extracellular portion of the chain corresponds to 113–118; sequence EVSHMY. A helical membrane pass occupies residues 119–139; it reads VAIGIISGLGYCFSFLPTVTI. Over 140 to 149 the chain is Cytoplasmic; that stretch reads LSQYFGKRRS. The chain crosses the membrane as a helical span at residues 150 to 170; the sequence is IVTAVASTGECFAVFAFAPAI. Over 171-184 the chain is Extracellular; sequence MALKERIGWRYSLL. The chain crosses the membrane as a helical span at residues 185 to 205; it reads FVGLLQLNIVIFGALLRPIFI. Over 206-299 the chain is Cytoplasmic; that stretch reads RGPASPKIVI…KEKSFICYAL (94 aa). Phosphoserine occurs at positions 234, 237, 240, and 247. The chain crosses the membrane as a helical span at residues 300–320; it reads FGLFATLGFFAPSLYIIPLGI. The Extracellular portion of the chain corresponds to 321–330; it reads SLGIDQDRAA. The chain crosses the membrane as a helical span at residues 331 to 351; it reads FLLSTMAIAEVFGRIGAGFVL. Topologically, residues 352–358 are cytoplasmic; the sequence is NREPIRK. Residues 359 to 379 form a helical membrane-spanning segment; it reads IYIELICVILLTVSLFAFTFA. The Extracellular portion of the chain corresponds to 380 to 381; it reads TE. The helical transmembrane segment at 382–402 threads the bilayer; that stretch reads FWGLMSCSIFFGFMVGTIGGT. Topologically, residues 403–423 are cytoplasmic; that stretch reads HIPLLAEDDVVGIEKMSSAAG. A helical membrane pass occupies residues 424-444; sequence VYIFIQSIAGLAGPPLAGLLV. Over 445–452 the chain is Extracellular; sequence DQSKIYSR. A helical transmembrane segment spans residues 453–473; it reads AFYSCAAGMALAAVCLALVRP. Over 474 to 523 the chain is Cytoplasmic; the sequence is CKMGLCQHHHSGETKVVSHRGKTLQDIPEDFLEMDLAKNEHRVHVQMEPV.

It belongs to the major facilitator superfamily. Monocarboxylate porter (TC 2.A.1.13) family. In terms of assembly, forms functional complexes with BSG/CD147 or EMB/GP70 ancillary proteins.

Its subcellular location is the basolateral cell membrane. The catalysed reaction is taurine(out) = taurine(in). In terms of biological role, monocarboxylate transporter selective for taurine. May associate with BSG/CD147 or EMB/GP70 ancillary proteins to mediate facilitative efflux or influx of taurine across the plasma membrane. The transport is pH- and sodium-independent. Rather low-affinity, is likely effective for taurine transport in tissues where taurine is present at high concentrations. The sequence is that of Monocarboxylate transporter 7 from Homo sapiens (Human).